An 884-amino-acid polypeptide reads, in one-letter code: MDSPCWLLLLLLGAFAIIGCVQAQDQQEFISLDCGLPMTEPSSYTESVTGLRFSSDAEFIQTGESGKIQASMENDYLKPYTRLRYFPEERRNCYSLSVDKNRKYLIRARFIYGNYDGRNSNPIFELHLGPNLWATIDLQKFVNGTMEEILHTPTSNSLNVCLVKTGTTTPLISALELRPLGNNSYLTDGSLNLFVRIYLNKTDGFLRYPDDIYDRRWHNYFMVDDWTQIFTTLEVTNDNNYEPPKKALAAAATPSNASAPLTISWPPDNPGDQYYLYSHFSEIQDLQTNDTREFDILWDGAVVEEGFIPPKLGVTTIHNLSPVTCKGENCIYQLIKTSRSTLPSLLNALEIYTVIQFPRSETNENDVVAVKNIEAAYKLSRIRWQGDPCVPQKYAWDGLNCSNNTDVSKPPRVLSLNLSSSGLTGIIAAAIQNLTHLEKLDLSNNTLTGVVPEFLAQMKSLVIINLSGNNLSGPLPQGLRREGLELLVQGNPRLCLSGSCTEKNSKKKFPVVIVASVASVAIIVAVLVIIFVLSKKKSSTVGALQPPLSMPMVHDNSPEPSIETKKRRFTYSEVIKMTNNFQRVVGEGGFGVVCHGTINGSEQVAVKVLSQSSSQGYKHFKAEVDLLLRVHHTNLVSLVGYCDERDHLALIYEFLPKGDLRQHLSGKSGGSFINWGNRLRIALEAALGLEYLHSGCTPPIVHRDIKTTNILLDEQLKAKLADFGLSRSFPIGGETHISTVVAGTPGYLDPEYYQTTRLGEKSDVYSFGIVLLEIITNQPVIDQSRSKSHISQWVGFELTRGDITKIMDPNLNGDYESRSVWRVLELAMSCANPSSVNRPNMSQVANELKECLVSENLRENMNMDSQNSLKVSMSFDTELFPRAR.

An N-terminal signal peptide occupies residues 1–23 (MDSPCWLLLLLLGAFAIIGCVQA). At 24–510 (QDQQEFISLD…TEKNSKKKFP (487 aa)) the chain is on the extracellular side. Residues Asn143, Asn182, Asn200, Asn256, Asn289, Asn400, Asn403, Asn417, Asn433, Asn444, Asn465, and Asn470 are each glycosylated (N-linked (GlcNAc...) asparagine). LRR repeat units lie at residues 412–433 (RVLSLNLSSSGLTGIIAAAIQN), 436–457 (HLEKLDLSNNTLTGVVPEFLAQ), and 460–480 (SLVIINLSGNNLSGPLPQGLR). Residues 511–531 (VVIVASVASVAIIVAVLVIIF) form a helical membrane-spanning segment. The Cytoplasmic portion of the chain corresponds to 532 to 884 (VLSKKKSSTV…FDTELFPRAR (353 aa)). Thr570 carries the phosphothreonine modification. The Protein kinase domain occupies 579–852 (NNFQRVVGEG…QVANELKECL (274 aa)). Residues 585 to 593 (VGEGGFGVV) and Lys607 each bind ATP. Position 652 is a phosphotyrosine (Tyr652). The active-site Proton acceptor is Asp704. Ser738 is subject to Phosphoserine. Thr739 and Thr744 each carry phosphothreonine. Position 752 is a phosphotyrosine (Tyr752).

Belongs to the protein kinase superfamily. Ser/Thr protein kinase family. As to quaternary structure, binds to the ammonium transporter AMT1-1.

The protein resides in the membrane. The catalysed reaction is L-seryl-[protein] + ATP = O-phospho-L-seryl-[protein] + ADP + H(+). It carries out the reaction L-threonyl-[protein] + ATP = O-phospho-L-threonyl-[protein] + ADP + H(+). In terms of biological role, required for accurate photosynthesis. The polypeptide is Probable LRR receptor-like serine/threonine-protein kinase PAM74 (PAM74) (Arabidopsis thaliana (Mouse-ear cress)).